The chain runs to 893 residues: MKNKKALFIPLFIIILFIAFFNKIINFIINIKWFKEVNYLAVYFTKMRAIIILMIPIFIIFFISIWMYYKSLIINKNKSVVDIGLNKNNYGKKLFFIFNFIVSIFLAYIFSSSYWYRILQFNNSVDFNVKDPIFFKDVSFYIFKLPLFESLYKVIISLLLFLVITTFIAYFILEAKYKIQSRKDINLKNINHGIKSFAGKQLAIVSGLIILFISFGHLIKIWNLVYSSNGVSFGASYTDVHATLLFYKIIVVITLISSIVTLLSIVKGKFKPVSVCIGITIFLIVSQNIASFLVQNFIVKSNEKTLEQPYIKNNIDLTRKAFALDDIEIRDFDIKNDLQKQDIADNKASIDNVRINSFKPTLEFYNQVQIIRYYYTFNDIDIDRYNINGKYNQVFLAAREIDTDALNPNTWQNRHLIYTHGFGAVMNKVNSVTSEGQPDFVIKDIPPYNKTNIKLTNPRIYFGEKTNDYVIVNTKINEFDYPREDSNKTNKYNGHAGIKMSFINRLLFAINKKDINFLLSKDIKKDSKIIINRNIVERAKKIAPFLTYDSDPYMVIYNGKIYWIIDAYTTTNRYPYSEPYDSINYIRNSAKVVIDSVDGDTNFYITDKKDPIVNNYAKIFKGLFKEEKDAPKEIREHFRYPKDLFSIQSKVLGKYHVKDPGVFYNGEDLWEVSKDQKHVEGETNTNDAPYIIMKLPDQNKEEMVLLNYFNVMKKDNMIALFGARMDGEQYGKKILYKLPSDKTVYSPYLFKQKINQDTNISKELSLWNREGSKVQYGDTIILPIKNSLLYIEPLYLRASGKNSIPEMKRVILSYNDKLVLSSSIQEGIKEIFNSKDNKINDKNEKDSTKTIDDSKLKKAQEYYNKAIEAQKNGDWTKYGENINELGNILNSIK.

Transmembrane regions (helical) follow at residues 9–29, 49–69, 94–114, 154–174, 202–222, 246–266, and 273–293; these read IPLF…NFII, AIII…WMYY, LFFI…SSSY, VIIS…FILE, LAIV…IKIW, FYKI…LSIV, and VSVC…ASFL.

The protein belongs to the UPF0182 family.

It localises to the cell membrane. The protein is UPF0182 protein CLM_0018 of Clostridium botulinum (strain Kyoto / Type A2).